The primary structure comprises 539 residues: Chaperonin GroEL 2 (539 aa).

ATP is bound by residues 29-32 (TIGP), 86-90 (DGTTT), Gly-414, 479-481 (DAL), and Asp-495.

It belongs to the chaperonin (HSP60) family. Forms a cylinder of 14 subunits composed of two heptameric rings stacked back-to-back. Interacts with the co-chaperonin GroES.

The protein resides in the cytoplasm. It carries out the reaction ATP + H2O + a folded polypeptide = ADP + phosphate + an unfolded polypeptide.. Its function is as follows. Together with its co-chaperonin GroES, plays an essential role in assisting protein folding. The GroEL-GroES system forms a nano-cage that allows encapsulation of the non-native substrate proteins and provides a physical environment optimized to promote and accelerate protein folding. In Synechococcus sp. (strain JA-2-3B'a(2-13)) (Cyanobacteria bacterium Yellowstone B-Prime), this protein is Chaperonin GroEL 2.